The chain runs to 254 residues: Dihydroorotate dehydrogenase B (NAD(+)), electron transfer subunit (254 aa).

In terms of domain architecture, FAD-binding FR-type spans 1–99 (MLQTEMKVIQ…LGPLGKGFDI (99 aa)). FAD contacts are provided by residues 50–53 (RPIS), 67–69 (LYR), and 74–75 (GT). Positions 218, 223, 226, and 241 each coordinate [2Fe-2S] cluster.

The protein belongs to the PyrK family. Heterotetramer of 2 PyrK and 2 PyrD type B subunits. It depends on [2Fe-2S] cluster as a cofactor. Requires FAD as cofactor.

Its pathway is pyrimidine metabolism; UMP biosynthesis via de novo pathway; orotate from (S)-dihydroorotate (NAD(+) route): step 1/1. In terms of biological role, responsible for channeling the electrons from the oxidation of dihydroorotate from the FMN redox center in the PyrD type B subunit to the ultimate electron acceptor NAD(+). The polypeptide is Dihydroorotate dehydrogenase B (NAD(+)), electron transfer subunit (Listeria monocytogenes serotype 4b (strain F2365)).